Here is an 825-residue protein sequence, read N- to C-terminus: 5E5 antigen (825 aa).

The disordered stretch occupies residues 126-825; sequence LSRDGYETET…RPRPSPKSPR (700 aa). The span at 157–180 shows a compositional bias: pro residues; that stretch reads PRAPPEPPDPGAPRPPPDPGPLPL. Polar residues predominate over residues 191-200; sequence VQVSTEQLLM. Basic and acidic residues predominate over residues 217 to 237; it reads TRGDRTQEGGEKPREQREGPR. A compositionally biased stretch (low complexity) spans 247–256; that stretch reads QQEESPQQEP. Composition is skewed to basic and acidic residues over residues 257 to 277, 315 to 342, and 392 to 406; these read SSERGDSVGEREARSPGHEGE, VPKDRGEGGREWGPEAAQEHGEAARDWT, and QEREPGPRDRVESPR. Residues 437-449 are compositionally biased toward basic residues; that stretch reads RRPRKRRGRKGRM. The segment covering 455–477 has biased composition (low complexity); sequence TTATSASATGGPAEEAGASAPEG. Residues 485-505 show a composition bias toward basic residues; sequence GRARGPRQQARRRHGPQRRRG. Over residues 524 to 536 the composition is skewed to polar residues; the sequence is GTTSGEQRADQSQ. The span at 537–562 shows a compositional bias: low complexity; sequence TLPALAGAPTAHAHAVPGPGPAAATL. The segment covering 565-575 has biased composition (basic residues); that stretch reads RGRRGSWRGGR. The span at 576 to 588 shows a compositional bias: gly residues; sequence RGGGAGASGGGRG. Residues 721–733 show a composition bias toward pro residues; it reads FPPPPPTRPPPVL. A compositionally biased stretch (low complexity) spans 734-750; that stretch reads LPLLRLTCAGDPGASRP.

As to expression, expressed in neurons.

It localises to the nucleus. Its function is as follows. Might have DNA-binding ability. The protein is 5E5 antigen of Rattus norvegicus (Rat).